Reading from the N-terminus, the 143-residue chain is Hexaprenyl-diphosphate synthase small subunit ((2E,6E)-farnesyl-diphosphate specific) (143 aa).

In terms of assembly, dimer of heterodimer or heterotetramer composed of a small (Hexs-a) and large (Hexs-B) subunit.

The enzyme catalyses 3 isopentenyl diphosphate + (2E,6E)-farnesyl diphosphate = all-trans-hexaprenyl diphosphate + 3 diphosphate. In terms of biological role, catalyzes the condensation of three molecules of isopentenyl diphosphate with farnesyl diphosphate (FPP) to yield (all-E)-hexaprenyl diphosphate (HexPP; C30), the precursor of the prenyl side chain of menaquinone-6. Large subunit Hexs-B catalyzes the condensation reaction and the final product chain length is cooperatively regulated by both the Hexs-A and Hexs-B subunits using the whole size of the hydrophobic cleft as a ruler. The protein is Hexaprenyl-diphosphate synthase small subunit ((2E,6E)-farnesyl-diphosphate specific) (hexs-a) of Micrococcus luteus (Micrococcus lysodeikticus).